A 73-amino-acid chain; its full sequence is U3-agatoxin-Ao1j (73 aa).

The signal sequence occupies residues 1-20 (MRTIISLLLLSAMVFAVIEA). Residues 21–34 (ISLEEGLQLFEGER) constitute a propeptide that is removed on maturation. Disulfide bonds link Cys36/Cys52, Cys43/Cys57, Cys51/Cys67, and Cys59/Cys65. Ser71 is modified (serine amide).

The protein belongs to the neurotoxin 07 (Beta/delta-agtx) family. 03 (aga-4) subfamily. Aga sub-subfamily. Expressed by the venom gland.

It localises to the secreted. Functionally, insecticidal neurotoxin that induces an irreversible spastic paralysis when injected into insects. Modifies presynaptic voltage-gated sodium channels (Nav), causing them to open at the normal resting potential of the nerve. This leads to spontaneous release of neurotransmitter and repetitive action potentials in motor neurons. This chain is U3-agatoxin-Ao1j, found in Agelena orientalis (Funnel-web spider).